Reading from the N-terminus, the 354-residue chain is Serine/threonine-protein phosphatase 2A activator 2 (354 aa).

It belongs to the PTPA-type PPIase family.

It localises to the cytoplasm. The enzyme catalyses [protein]-peptidylproline (omega=180) = [protein]-peptidylproline (omega=0). Its function is as follows. PPIases accelerate the folding of proteins. It catalyzes the cis-trans isomerization of proline imidic peptide bonds in oligopeptides. Acts as a regulatory subunit for PP2A-like phosphatases modulating their activity or substrate specificity, probably by inducing a conformational change in the catalytic subunit, a direct target of the PPIase. Can reactivate inactive phosphatase PP2A-phosphatase methylesterase complexes (PP2Ai) in presence of ATP and Mg(2+) by dissociating the inactive form from the complex. The chain is Serine/threonine-protein phosphatase 2A activator 2 (RRD2) from Yarrowia lipolytica (strain CLIB 122 / E 150) (Yeast).